We begin with the raw amino-acid sequence, 518 residues long: Dihydro-ML-236C monooxygenase mlcC (518 aa).

At 1 to 31 the chain is on the cytoplasmic side; that stretch reads MLGQVLLTVESYQWVSTPQALVAVAVLLSLI. Residues 32 to 48 form a helical; Signal-anchor for type II membrane protein membrane-spanning segment; sequence AYRLRGRQSELQVYNPK. The Lumenal segment spans residues 49–518; sequence KWWELTTMRA…EDIPLPHDRC (470 aa). Cys454 provides a ligand contact to heme.

It belongs to the cytochrome P450 family. It depends on heme as a cofactor.

It is found in the endoplasmic reticulum membrane. It carries out the reaction dihydro-ML-236C carboxylate + reduced [NADPH--hemoprotein reductase] + O2 = ML-236C carboxylate + oxidized [NADPH--hemoprotein reductase] + 2 H2O + H(+). The enzyme catalyses ML-236C carboxylate + reduced [NADPH--hemoprotein reductase] + O2 = ML-236A carboxylate + oxidized [NADPH--hemoprotein reductase] + H2O + H(+). It functions in the pathway polyketide biosynthesis. Functionally, dihydro-ML-236C carboxylate monooxygenase; part of the gene cluster that mediates the biosynthesis of compactin, also known as mevastatin or ML-236B, and which acts as a potent competitive inhibitor of HMG-CoA reductase. Compactin biosynthesis is performed in two stages. The first stage is catalyzed by the nonaketide synthase mlcA, which belongs to type I polyketide synthases and catalyzes the iterative nine-step formation of the polyketide. This PKS stage is completed by the action of dehydrogenase mlcG, which catalyzes the NADPH-dependent reduction of the unsaturated tetra-, penta- and heptaketide intermediates that arise during the mlcA-mediated biosynthesis of the nonaketide chain and leads to dihydro-ML-236C carboxylate. Covalently bound dihydro-ML-236C carboxylate is released from mlcA by the mlcF esterase. Conversion of dihydro-ML-236C carboxylate into ML-236A carboxylate is subsequently performed with the participation of molecular oxygen and P450 monoogygenase mlcC. Finally, mlcH performs the conversion of ML-236A carboxylate to ML-236B/compactin carboxylate through the addition of the side-chain diketide moiety produced by the diketide synthase mlcB. The sequence is that of Dihydro-ML-236C monooxygenase mlcC from Penicillium citrinum.